The sequence spans 304 residues: Phosphonates import ATP-binding protein PhnC 1 (304 aa).

An ABC transporter domain is found at 4-240 (VSLQNVTKLF…VIDDLYYAGS (237 aa)). 37-44 (GPSGAGKS) contributes to the ATP binding site. Positions 240 to 304 (SESTPVSHGD…TETDTGEAQL (65 aa)) are disordered. Residues 263 to 272 (TSVSSDMETT) are compositionally biased toward polar residues. Acidic residues predominate over residues 289-304 (TDTETDTETDTGEAQL).

Belongs to the ABC transporter superfamily. Phosphonates importer (TC 3.A.1.9.1) family. In terms of assembly, the complex is composed of two ATP-binding proteins (PhnC), two transmembrane proteins (PhnE) and a solute-binding protein (PhnD).

It localises to the cell membrane. The catalysed reaction is phosphonate(out) + ATP + H2O = phosphonate(in) + ADP + phosphate + H(+). Part of the ABC transporter complex PhnCDE involved in phosphonates import. Responsible for energy coupling to the transport system. This Haloquadratum walsbyi (strain DSM 16790 / HBSQ001) protein is Phosphonates import ATP-binding protein PhnC 1.